An 814-amino-acid polypeptide reads, in one-letter code: Threonine--tRNA ligase 2, cytoplasmic (814 aa).

A coiled-coil region spans residues Ala2–Arg72. The tract at residues Arg62 to Pro142 is disordered. 3 stretches are compositionally biased toward basic and acidic residues: residues Ser63 to Arg72, Glu88 to Gln102, and Gly119 to Glu137. The TGS domain occupies Lys172–Lys234. A Nuclear localization signal motif is present at residues Lys798–Lys804.

It belongs to the class-II aminoacyl-tRNA synthetase family.

It is found in the cytoplasm. The protein localises to the nucleus. The enzyme catalyses tRNA(Thr) + L-threonine + ATP = L-threonyl-tRNA(Thr) + AMP + diphosphate + H(+). In terms of biological role, catalyzes the attachment of threonine to tRNA(Thr) in a two-step reaction: threonine is first activated by ATP to form Thr-AMP and then transferred to the acceptor end of tRNA(Thr). Also edits incorrectly charged tRNA(Thr) via its editing domain, at the post-transfer stage. This chain is Threonine--tRNA ligase 2, cytoplasmic (tars3), found in Xenopus tropicalis (Western clawed frog).